A 269-amino-acid chain; its full sequence is Phosphate import ATP-binding protein PstB (269 aa).

The region spanning 14-253 (LTLEDVSISY…EFDSTKKIFS (240 aa)) is the ABC transporter domain. 46 to 53 (GPSGCGKS) provides a ligand contact to ATP.

Belongs to the ABC transporter superfamily. Phosphate importer (TC 3.A.1.7) family. The complex is composed of two ATP-binding proteins (PstB), two transmembrane proteins (PstC and PstA) and a solute-binding protein (PstS).

Its subcellular location is the cell inner membrane. The enzyme catalyses phosphate(out) + ATP + H2O = ADP + 2 phosphate(in) + H(+). Its function is as follows. Part of the ABC transporter complex PstSACB involved in phosphate import. Responsible for energy coupling to the transport system. The chain is Phosphate import ATP-binding protein PstB from Prochlorococcus marinus subsp. pastoris (strain CCMP1986 / NIES-2087 / MED4).